A 399-amino-acid polypeptide reads, in one-letter code: Tyrosine--tRNA ligase 2 (399 aa).

The short motif at 41–50 (PTAPDLHLGH) is the 'HIGH' region element. Residues 225-229 (KMSKS) carry the 'KMSKS' region motif. Lys228 is a binding site for ATP. In terms of domain architecture, S4 RNA-binding spans 336–398 (ILIANLLKEA…GKRKFANITV (63 aa)).

The protein belongs to the class-I aminoacyl-tRNA synthetase family. TyrS type 2 subfamily. In terms of assembly, homodimer.

The protein resides in the cytoplasm. It catalyses the reaction tRNA(Tyr) + L-tyrosine + ATP = L-tyrosyl-tRNA(Tyr) + AMP + diphosphate + H(+). In terms of biological role, catalyzes the attachment of tyrosine to tRNA(Tyr) in a two-step reaction: tyrosine is first activated by ATP to form Tyr-AMP and then transferred to the acceptor end of tRNA(Tyr). The polypeptide is Tyrosine--tRNA ligase 2 (Pseudoalteromonas translucida (strain TAC 125)).